The chain runs to 370 residues: Anthranilate phosphoribosyltransferase (370 aa).

Residues Gly82, 85–86, Thr90, 92–95, 110–118, and Ser122 each bind 5-phospho-alpha-D-ribose 1-diphosphate; these read GD, NVST, and KHGNRAATS. Gly82 lines the anthranilate pocket. A Mg(2+)-binding site is contributed by Ser94. Asn113 serves as a coordination point for anthranilate. Arg168 is an anthranilate binding site. The Mg(2+) site is built by Asp226 and Glu227.

This sequence belongs to the anthranilate phosphoribosyltransferase family. Homodimer. The cofactor is Mg(2+).

The enzyme catalyses N-(5-phospho-beta-D-ribosyl)anthranilate + diphosphate = 5-phospho-alpha-D-ribose 1-diphosphate + anthranilate. Its pathway is amino-acid biosynthesis; L-tryptophan biosynthesis; L-tryptophan from chorismate: step 2/5. In terms of biological role, catalyzes the transfer of the phosphoribosyl group of 5-phosphorylribose-1-pyrophosphate (PRPP) to anthranilate to yield N-(5'-phosphoribosyl)-anthranilate (PRA). The protein is Anthranilate phosphoribosyltransferase of Methanosarcina acetivorans (strain ATCC 35395 / DSM 2834 / JCM 12185 / C2A).